The following is a 616-amino-acid chain: Zinc metalloproteinase-disintegrin-like ecarin (616 aa).

The first 20 residues, 1 to 20 (MIQILLVIICLAVFPYQGCS), serve as a signal peptide directing secretion. Residues 21 to 190 (IILGSGNVND…EPIKKTLGLI (170 aa)) constitute a propeptide that is removed on maturation. The Peptidase M12B domain maps to 201 to 397 (KFIELVVVVD…YNPKCILDPP (197 aa)). E204 lines the Ca(2+) pocket. N-linked (GlcNAc...) asparagine glycans are attached at residues N219 and N261. D288 contacts Ca(2+). Residues N295 and N326 are each glycosylated (N-linked (GlcNAc...) asparagine). 3 disulfides stabilise this stretch: C312/C392, C352/C376, and C354/C359. H337 lines the Zn(2+) pocket. Residue E338 is part of the active site. Positions 341 and 347 each coordinate Zn(2+). Ca(2+) is bound by residues C392, V407, N410, I412, E414, E417, and D420. The region spanning 405 to 491 (PAVCGNEIWE…ECPRNEFQRN (87 aa)) is the Disintegrin domain. 14 cysteine pairs are disulfide-bonded: C408/C437, C419/C432, C421/C427, C431/C454, C445/C451, C450/C476, C463/C483, C470/C502, C495/C507, C514/C567, C529/C578, C542/C555, C562/C604, and C598/C609. The short motif at 469–471 (DCD) is the D/ECD-tripeptide element. Positions 471, 472, and 486 each coordinate Ca(2+). N-linked (GlcNAc...) asparagine glycosylation occurs at N497.

The protein belongs to the venom metalloproteinase (M12B) family. P-III subfamily. P-IIIa sub-subfamily. In terms of assembly, monomer. Zn(2+) serves as cofactor. As to expression, expressed by the venom gland.

It is found in the secreted. Snake venom zinc metalloproteinase that catalyzes the conversion of prothrombin (F2) to alpha-thrombin through formation of a thrombin intermediate, thereby functioning as a procoagulant protein. Has a low Km for prothrombin and a high kcat. Cleaves the 320-Arg-Ile-321 bond in prothrombin and produces meizothrombin which is ultimately converted to alpha-thrombin by autolysis. This chain is Zinc metalloproteinase-disintegrin-like ecarin, found in Echis carinatus (Saw-scaled viper).